Here is a 925-residue protein sequence, read N- to C-terminus: Serine/threonine-protein kinase SIK2 (925 aa).

The region spanning 20-271 (YDIEGTLGKG…IAQIKEHKWM (252 aa)) is the Protein kinase domain. Residue threonine 25 is modified to Phosphothreonine. Residues 26 to 34 (LGKGNFAVV) and lysine 49 contribute to the ATP site. Position 53 is an N6-acetyllysine; by EP300 (lysine 53). Aspartate 142 (proton acceptor) is an active-site residue. At threonine 175 the chain carries Phosphothreonine. A UBA domain is found at 295-335 (EFNEQVLRLMHSLGIDQQKTIESLQNKSYNHFAAIYFLLVE). A Phosphoserine modification is found at serine 534. Positions 564–586 (ALSSQKREVHNRSPVSFREGRRA) are disordered. A Phosphoserine modification is found at serine 587. Disordered stretches follow at residues 630-674 (PNLA…PRQS), 742-776 (SSYPQPSQQLPLPRQETPPPSQQAPPFSLTQPLSP), and 800-895 (QPLP…SSYD). Low complexity-rich tracts occupy residues 648-659 (QEEVSQQQESVS) and 742-756 (SSYPQPSQQLPLPRQ). Polar residues predominate over residues 765-774 (APPFSLTQPL). The span at 808 to 820 (PRAAPLPTQLQQQ) shows a compositional bias: low complexity. Residues 821 to 833 (QPPPPPPPPPPRQ) show a composition bias toward pro residues.

Belongs to the protein kinase superfamily. CAMK Ser/Thr protein kinase family. SNF1 subfamily. As to quaternary structure, interacts with and phosphorylates TORC2/CRTC2. It depends on Mg(2+) as a cofactor. In terms of processing, phosphorylated at Thr-175 by STK11/LKB1 in complex with STE20-related adapter-alpha (STRADA) pseudo kinase and CAB39. Phosphorylated at Thr-484 in response to insulin in adipocytes. Post-translationally, acetylation at Lys-53 inhibits kinase activity. Deacetylated by HDAC6.

Its subcellular location is the cytoplasm. It localises to the endoplasmic reticulum membrane. The enzyme catalyses L-seryl-[protein] + ATP = O-phospho-L-seryl-[protein] + ADP + H(+). The catalysed reaction is L-threonyl-[protein] + ATP = O-phospho-L-threonyl-[protein] + ADP + H(+). Its activity is regulated as follows. Activated by phosphorylation on Thr-175. In terms of biological role, serine/threonine-protein kinase that plays a role in many biological processes such as fatty acid oxidation, autophagy, immune response or glucose metabolism. Phosphorylates 'Ser-794' of IRS1 in insulin-stimulated adipocytes, potentially modulating the efficiency of insulin signal transduction. Inhibits CREB activity by phosphorylating and repressing TORCs, the CREB-specific coactivators. Phosphorylates EP300 and thus inhibits its histone acetyltransferase activity. In turn, regulates the DNA-binding ability of several transcription factors such as PPARA or MLXIPL. Also plays a role in thymic T-cell development. The protein is Serine/threonine-protein kinase SIK2 (SIK2) of Pongo abelii (Sumatran orangutan).